The following is an 81-amino-acid chain: uncharacterized protein (81 aa).

It belongs to the ycf70 family.

The protein resides in the plastid. It is found in the chloroplast. This is an uncharacterized protein from Saccharum officinarum (Sugarcane).